Consider the following 409-residue polypeptide: L-cysteine:1D-myo-inositol 2-amino-2-deoxy-alpha-D-glucopyranoside ligase (409 aa).

C43 lines the Zn(2+) pocket. L-cysteinyl-5'-AMP-binding positions include 43–46, T58, and 81–83; these read CGIT and NVT. The 'HIGH' region motif lies at 45–55; that stretch reads ITPYDATHMGH. The short motif at 183 to 188 is the 'ERGGDP' region element; sequence ERGGDP. W224 provides a ligand contact to L-cysteinyl-5'-AMP. C228 serves as a coordination point for Zn(2+). Residue 246–248 coordinates L-cysteinyl-5'-AMP; that stretch reads GSD. H253 serves as a coordination point for Zn(2+). V280 is an L-cysteinyl-5'-AMP binding site. The 'KMSKS' region signature appears at 286 to 290; it reads KMSKS.

This sequence belongs to the class-I aminoacyl-tRNA synthetase family. MshC subfamily. Monomer. The cofactor is Zn(2+).

It carries out the reaction 1D-myo-inositol 2-amino-2-deoxy-alpha-D-glucopyranoside + L-cysteine + ATP = 1D-myo-inositol 2-(L-cysteinylamino)-2-deoxy-alpha-D-glucopyranoside + AMP + diphosphate + H(+). Functionally, catalyzes the ATP-dependent condensation of GlcN-Ins and L-cysteine to form L-Cys-GlcN-Ins. The protein is L-cysteine:1D-myo-inositol 2-amino-2-deoxy-alpha-D-glucopyranoside ligase (mshC) of Streptomyces avermitilis (strain ATCC 31267 / DSM 46492 / JCM 5070 / NBRC 14893 / NCIMB 12804 / NRRL 8165 / MA-4680).